The primary structure comprises 151 residues: Probable cGMP 3',5'-cyclic phosphodiesterase subunit delta (151 aa).

Belongs to the PDE6D/unc-119 family. In terms of assembly, interacts with Pde6.

Its subcellular location is the nucleus. The protein resides in the cytoplasm. This Drosophila persimilis (Fruit fly) protein is Probable cGMP 3',5'-cyclic phosphodiesterase subunit delta.